Here is a 331-residue protein sequence, read N- to C-terminus: MGGAARLSAPRALVLWAVLGAAAHIGPAPDPEDWWSYKDNLQGNFVPGPPFWGLVNAAWSLCAVGKRQSPVDVELKRVLYDPFLPPLRLSTGGEKLRGTLYNTGRHVSFLPAPRPVVNVSGGPLLYSHRLSELLLLFGAHDGAGSEHQINHQGFSAEVQLIHFNQELYGNLSAASRGPNGLAILSLFVNVSQVAGNSNPFLSRLLNRDTITRISYKNDAYFLQDLSLELLFPESFGFITYQGSLSTPPCSETVTWILIDRALNITSLQMHSLRLLSQNPPSQIFQSLSGNGRPLQPLAHRALRGNRDPRHPERRCRGPNYRLHVDGAPHGR.

Positions 1–23 are cleaved as a signal peptide; that stretch reads MGGAARLSAPRALVLWAVLGAAA. In terms of domain architecture, Alpha-carbonic anhydrase spans 33-306; the sequence is DWWSYKDNLQ…LAHRALRGNR (274 aa). N-linked (GlcNAc...) asparagine glycans are attached at residues N118, N170, N189, and N263. Residues 303–331 form a disordered region; that stretch reads RGNRDPRHPERRCRGPNYRLHVDGAPHGR. Basic and acidic residues predominate over residues 322 to 331; sequence LHVDGAPHGR.

It belongs to the alpha-carbonic anhydrase family.

Its subcellular location is the secreted. Functionally, does not have a catalytic activity. This chain is Carbonic anhydrase-related protein 11 (CA11), found in Sus scrofa (Pig).